Consider the following 262-residue polypeptide: MGHEDAVYLAKLAEQAERYEEMVENMKIVASEDRDLTVEERNLLSVAYKNVIGARRASWRIVTSIEQKEESKGNSSQVTLIKEYRQKIENELAKICDDILEVLDQHLIPSAKSGESKVFYHKIKGDYHRYLAEFAIGDRRKDSADKSLEAYKAATEVAQTELPPTHPIRLGLALNFSVFYYEILNAPDQACHLAKQAFDDAIAELDTLSEESYKDSTLIMQLLRDNLTLWTSSEAETPARLMPLLRRRPLLRLPSRRRRAQG.

It belongs to the 14-3-3 family.

The sequence is that of 14-3-3 protein homolog from Trichoderma harzianum (Hypocrea lixii).